The sequence spans 310 residues: MAKVTANDLLERFQLELLSGEEGIHRSITTSDISRPGIEMAGFFTYYPAKRLQLLGRTELSFYKQLSPVDKEERMSKLCTYDTPGIIISRGLEVPPELLKASEKVGVPVLRSNITTTRLSSMLTNFLESQLAPTTAVHGVLVDIYGIGVLITGSSGVGKSETALDLVRRGHRLVADDSVEIRREHEDTLVGRSPELIQHLLEIRGLGIINVMTLFGAGAVRPFKRIALCVNLELWDQKKVYDRLGLSEDYLRIMNVDIPKLTIPVRPGRNLAVIIEVAAMNFRLKRLGINAAQQFSDRLNDVIEEGEQEF.

Catalysis depends on residues histidine 138 and lysine 159. ATP is bound at residue 153 to 160 (GSSGVGKS). Residue serine 160 participates in Mg(2+) binding. The Proton acceptor; for phosphorylation activity. Proton donor; for dephosphorylation activity role is filled by aspartate 177. Positions 201–210 (LEIRGLGIIN) are important for the catalytic mechanism of both phosphorylation and dephosphorylation. Glutamate 202 is a binding site for Mg(2+). Residue arginine 243 is part of the active site. Positions 264–269 (PVRPGR) are important for the catalytic mechanism of dephosphorylation.

It belongs to the HPrK/P family. As to quaternary structure, homohexamer. Mg(2+) is required as a cofactor.

It catalyses the reaction [HPr protein]-L-serine + ATP = [HPr protein]-O-phospho-L-serine + ADP + H(+). The catalysed reaction is [HPr protein]-O-phospho-L-serine + phosphate + H(+) = [HPr protein]-L-serine + diphosphate. Functionally, catalyzes the ATP- as well as the pyrophosphate-dependent phosphorylation of a specific serine residue in HPr, a phosphocarrier protein of the phosphoenolpyruvate-dependent sugar phosphotransferase system (PTS). HprK/P also catalyzes the pyrophosphate-producing, inorganic phosphate-dependent dephosphorylation (phosphorolysis) of seryl-phosphorylated HPr (P-Ser-HPr). The two antagonistic activities of HprK/P are regulated by several intracellular metabolites, which change their concentration in response to the absence or presence of rapidly metabolisable carbon sources (glucose, fructose, etc.) in the growth medium. Also phosphorylates/dephosphorylates the HPr-like catabolite repression protein crh on a specific serine residue. Therefore, by controlling the phosphorylation state of HPr and crh, HPrK/P is a sensor enzyme that plays a major role in the regulation of carbon metabolism and sugar transport: it mediates carbon catabolite repression (CCR), and regulates PTS-catalyzed carbohydrate uptake and inducer exclusion. The sequence is that of HPr kinase/phosphorylase (hprK) from Halalkalibacterium halodurans (strain ATCC BAA-125 / DSM 18197 / FERM 7344 / JCM 9153 / C-125) (Bacillus halodurans).